The primary structure comprises 355 residues: UDP-N-acetylglucosamine--N-acetylmuramyl-(pentapeptide) pyrophosphoryl-undecaprenol N-acetylglucosamine transferase (355 aa).

UDP-N-acetyl-alpha-D-glucosamine is bound by residues 14 to 16 (TGG), Asn-126, Arg-162, Ser-190, Ile-245, 264 to 269 (ALTVCE), and Gln-289.

The protein belongs to the glycosyltransferase 28 family. MurG subfamily.

Its subcellular location is the cell inner membrane. It carries out the reaction di-trans,octa-cis-undecaprenyl diphospho-N-acetyl-alpha-D-muramoyl-L-alanyl-D-glutamyl-meso-2,6-diaminopimeloyl-D-alanyl-D-alanine + UDP-N-acetyl-alpha-D-glucosamine = di-trans,octa-cis-undecaprenyl diphospho-[N-acetyl-alpha-D-glucosaminyl-(1-&gt;4)]-N-acetyl-alpha-D-muramoyl-L-alanyl-D-glutamyl-meso-2,6-diaminopimeloyl-D-alanyl-D-alanine + UDP + H(+). It participates in cell wall biogenesis; peptidoglycan biosynthesis. Functionally, cell wall formation. Catalyzes the transfer of a GlcNAc subunit on undecaprenyl-pyrophosphoryl-MurNAc-pentapeptide (lipid intermediate I) to form undecaprenyl-pyrophosphoryl-MurNAc-(pentapeptide)GlcNAc (lipid intermediate II). The protein is UDP-N-acetylglucosamine--N-acetylmuramyl-(pentapeptide) pyrophosphoryl-undecaprenol N-acetylglucosamine transferase of Mannheimia succiniciproducens (strain KCTC 0769BP / MBEL55E).